Reading from the N-terminus, the 249-residue chain is Pyridoxine 5'-phosphate synthase (249 aa).

Asn-10 is a binding site for 3-amino-2-oxopropyl phosphate. Residue 12 to 13 (DH) participates in 1-deoxy-D-xylulose 5-phosphate binding. Arg-21 provides a ligand contact to 3-amino-2-oxopropyl phosphate. His-46 functions as the Proton acceptor in the catalytic mechanism. Residues Arg-48 and His-53 each contribute to the 1-deoxy-D-xylulose 5-phosphate site. Glu-73 (proton acceptor) is an active-site residue. Residue Thr-103 coordinates 1-deoxy-D-xylulose 5-phosphate. His-194 serves as the catalytic Proton donor. 3-amino-2-oxopropyl phosphate-binding positions include Gly-195 and 216-217 (GH).

Belongs to the PNP synthase family. In terms of assembly, homooctamer; tetramer of dimers.

The protein resides in the cytoplasm. It carries out the reaction 3-amino-2-oxopropyl phosphate + 1-deoxy-D-xylulose 5-phosphate = pyridoxine 5'-phosphate + phosphate + 2 H2O + H(+). The protein operates within cofactor biosynthesis; pyridoxine 5'-phosphate biosynthesis; pyridoxine 5'-phosphate from D-erythrose 4-phosphate: step 5/5. Functionally, catalyzes the complicated ring closure reaction between the two acyclic compounds 1-deoxy-D-xylulose-5-phosphate (DXP) and 3-amino-2-oxopropyl phosphate (1-amino-acetone-3-phosphate or AAP) to form pyridoxine 5'-phosphate (PNP) and inorganic phosphate. This chain is Pyridoxine 5'-phosphate synthase, found in Rhodospirillum rubrum (strain ATCC 11170 / ATH 1.1.1 / DSM 467 / LMG 4362 / NCIMB 8255 / S1).